We begin with the raw amino-acid sequence, 301 residues long: Protein ARMCX6 (301 aa).

The mitochondrion outer membrane (MOM)-targeting sequence stretch occupies residues 1-6; it reads MGRARE. At 1–7 the chain is on the mitochondrial intermembrane side; sequence MGRAREM. A helical; Signal-anchor membrane pass occupies residues 8–25; it reads GWMAAGLMIGAGACYCMY. The interval 26–36 is mitochondrion outer membrane (MOM)-targeting sequence; it reads KLTMGRSEGNE. Residues 26–301 are Cytoplasmic-facing; the sequence is KLTMGRSEGN…REMLVEAISP (276 aa). The tract at residues 69-101 is disordered; it reads WSEDGDWDEPGAPGGTEDRRSGGGKANRAHPIK.

Belongs to the eutherian X-chromosome-specific Armcx family. As to expression, highly expressed in the developing neural tissues, neural crest derivatives and hind limbs. Also widely expressed in the adult nervous tissue, especially in the forebrain, including the cerebral cortex, hippocampus and thalamus.

It localises to the mitochondrion. The protein localises to the mitochondrion outer membrane. Its function is as follows. May regulate the dynamics and distribution of mitochondria in neural cells. The sequence is that of Protein ARMCX6 (Armcx6) from Mus musculus (Mouse).